A 162-amino-acid polypeptide reads, in one-letter code: Putative 4-hydroxy-4-methyl-2-oxoglutarate aldolase (162 aa).

Substrate-binding positions include 75-78 and Arg-97; that span reads GDML. Asp-98 lines the a divalent metal cation pocket.

Belongs to the class II aldolase/RraA-like family. As to quaternary structure, homotrimer. Requires a divalent metal cation as cofactor.

It carries out the reaction 4-hydroxy-4-methyl-2-oxoglutarate = 2 pyruvate. The enzyme catalyses oxaloacetate + H(+) = pyruvate + CO2. Functionally, catalyzes the aldol cleavage of 4-hydroxy-4-methyl-2-oxoglutarate (HMG) into 2 molecules of pyruvate. Also contains a secondary oxaloacetate (OAA) decarboxylase activity due to the common pyruvate enolate transition state formed following C-C bond cleavage in the retro-aldol and decarboxylation reactions. In Azotobacter vinelandii (strain DJ / ATCC BAA-1303), this protein is Putative 4-hydroxy-4-methyl-2-oxoglutarate aldolase.